The sequence spans 146 residues: Large ribosomal subunit protein uL15 (146 aa).

The interval 1-51 (MQLNTLKPAEGSKKNRRRVGRGIGSGLGKTAGRGHKGQKSRSGGFHKVGFE) is disordered. The segment covering 21 to 31 (RGIGSGLGKTA) has biased composition (gly residues).

This sequence belongs to the universal ribosomal protein uL15 family. In terms of assembly, part of the 50S ribosomal subunit.

Its function is as follows. Binds to the 23S rRNA. This chain is Large ribosomal subunit protein uL15, found in Polynucleobacter asymbioticus (strain DSM 18221 / CIP 109841 / QLW-P1DMWA-1) (Polynucleobacter necessarius subsp. asymbioticus).